Consider the following 498-residue polypeptide: MQRIIGTEVEYGISSPSDPTANPILTSTQAVLAYAAAAGIQRAKRTRWDYEVESPLRDARGFDLSRSSGPPPIVDADEVGAANMILTNGARLYVDHAHPEYSAPECTDPMDAVIWDKAGERVMEAAARHVASVPGAAKLQLYKNNVDGKGASYGSHENYLMSRQTPFSAVIAGLTPFMVSRQVVTGSGRVGIGPSGDEPGFQLSQRADYIEVEVGLETTLKRGIINTRDEPHADADKYRRLHVIIGDANLAETSTYLKLGTTSLVLDLIEEGVDLSDLALARPVHAVHVISRDPSLRATVALADGRELTALALQRIYLDRVAKLVDSRDPDPRASHVIETWANVLDLLERDPMECAEILDWPAKLRLLEGFRQRENLTWQAPRLHLVDLQYSDVRLDKGLYNRLVARGSMKRLVTEQQVLDAVENPPTDTRAYFRGECLRRFGADIAAASWDSVIFDLGGDSLVRIPTLEPLRGSKAHVGALLDSVDSAVELVEQLTN.

Residue 6–10 (GTEVE) coordinates ATP. The Mg(2+) site is built by glutamate 8 and tyrosine 93. The active-site Proton acceptor is aspartate 95. Glutamate 100 contributes to the Mg(2+) binding site. Residue 102-103 (SA) coordinates ATP. Histidine 156 serves as a coordination point for Mg(2+). Residues asparagine 158 and arginine 240 each contribute to the ATP site. Histidine 242 is a Mg(2+) binding site.

This sequence belongs to the Pup ligase/Pup deamidase family. Pup deamidase subfamily. It depends on ATP as a cofactor.

The enzyme catalyses [prokaryotic ubiquitin-like protein]-C-terminal-L-glutamine + H2O = [prokaryotic ubiquitin-like protein]-C-terminal-L-glutamate + NH4(+). It functions in the pathway protein degradation; proteasomal Pup-dependent pathway. In terms of biological role, specifically catalyzes the deamidation of the C-terminal glutamine of the prokaryotic ubiquitin-like protein Pup to glutamate, thereby rendering Pup competent for conjugation. Probably also displays depupylase (DPUP) activity, removing conjugated Pup from target proteins; thus may be involved in the recycling of Pup and may function similarly to deubiquitinases (DUBs) in eukaryotes to prevent or promote proteasomal degradation of certain proteins. The chain is Pup deamidase/depupylase (dop) from Mycolicibacterium smegmatis (strain ATCC 700084 / mc(2)155) (Mycobacterium smegmatis).